The sequence spans 111 residues: Cytochrome c-550 (111 aa).

Residues Cys-13, Cys-16, His-17, and Met-90 each coordinate heme c.

Binds 1 heme c group covalently per subunit.

In Novispirillum itersonii (Aquaspirillum itersonii), this protein is Cytochrome c-550.